The primary structure comprises 338 residues: MNVYYDKDCDLSIVQGKKVAIIGYGSQGHAHALNLQDSNVDVTVGLRADSGSWKKAENAGLKVAEVEEAVKAADIIMILTPDEFQKELYNDVIEPNIKQGATLAFAHGFAIHYNQVIPRSDLDVIMVAPKAPGHTVRSEFAKGGGIPDLIAIYQDASGQAKQLALSYAAGVGGGRSGIIETTFKDETETDLFGEQAVLCGGAVELVKMGFETLTEAGYAPEMAYFECLHELKLIVDLMYEGGIADMNYSISNNAEYGEYVTGPEVINEQSREAMRNALKRIQSGEYAKMFISEGATNYPSMTARRRNNAEHQIEITGAKLRGMMPWIGGNKIIDKDKN.

The 181-residue stretch at Met-1–Thr-181 folds into the KARI N-terminal Rossmann domain. NADP(+)-binding positions include Tyr-24–Gln-27, Arg-47, Ser-50, Ser-52, and Asp-82–Gln-85. Residue His-107 is part of the active site. Gly-133 contacts NADP(+). The KARI C-terminal knotted domain maps to Thr-182–Ile-327. 4 residues coordinate Mg(2+): Asp-190, Glu-194, Glu-226, and Glu-230. Ser-251 lines the substrate pocket.

Belongs to the ketol-acid reductoisomerase family. Requires Mg(2+) as cofactor.

The enzyme catalyses (2R)-2,3-dihydroxy-3-methylbutanoate + NADP(+) = (2S)-2-acetolactate + NADPH + H(+). The catalysed reaction is (2R,3R)-2,3-dihydroxy-3-methylpentanoate + NADP(+) = (S)-2-ethyl-2-hydroxy-3-oxobutanoate + NADPH + H(+). The protein operates within amino-acid biosynthesis; L-isoleucine biosynthesis; L-isoleucine from 2-oxobutanoate: step 2/4. It functions in the pathway amino-acid biosynthesis; L-valine biosynthesis; L-valine from pyruvate: step 2/4. Functionally, involved in the biosynthesis of branched-chain amino acids (BCAA). Catalyzes an alkyl-migration followed by a ketol-acid reduction of (S)-2-acetolactate (S2AL) to yield (R)-2,3-dihydroxy-isovalerate. In the isomerase reaction, S2AL is rearranged via a Mg-dependent methyl migration to produce 3-hydroxy-3-methyl-2-ketobutyrate (HMKB). In the reductase reaction, this 2-ketoacid undergoes a metal-dependent reduction by NADPH to yield (R)-2,3-dihydroxy-isovalerate. In Psychrobacter arcticus (strain DSM 17307 / VKM B-2377 / 273-4), this protein is Ketol-acid reductoisomerase (NADP(+)).